Reading from the N-terminus, the 172-residue chain is Shikimate kinase (172 aa).

ATP is bound at residue 17 to 22 (GTGKST). Mg(2+) is bound at residue S21. Residues D39, R63, and G84 each contribute to the substrate site. R122 contributes to the ATP binding site. R140 contributes to the substrate binding site.

Belongs to the shikimate kinase family. In terms of assembly, monomer. Mg(2+) serves as cofactor.

The protein localises to the cytoplasm. It carries out the reaction shikimate + ATP = 3-phosphoshikimate + ADP + H(+). The protein operates within metabolic intermediate biosynthesis; chorismate biosynthesis; chorismate from D-erythrose 4-phosphate and phosphoenolpyruvate: step 5/7. Functionally, catalyzes the specific phosphorylation of the 3-hydroxyl group of shikimic acid using ATP as a cosubstrate. In Staphylococcus haemolyticus (strain JCSC1435), this protein is Shikimate kinase.